A 134-amino-acid polypeptide reads, in one-letter code: Small ribosomal subunit protein uS8c (134 aa).

It belongs to the universal ribosomal protein uS8 family. In terms of assembly, part of the 30S ribosomal subunit.

The protein resides in the plastid. The protein localises to the chloroplast. In terms of biological role, one of the primary rRNA binding proteins, it binds directly to 16S rRNA central domain where it helps coordinate assembly of the platform of the 30S subunit. The protein is Small ribosomal subunit protein uS8c (rps8) of Aethionema grandiflorum (Persian stone-cress).